Consider the following 260-residue polypeptide: Proteasome subunit alpha type-1 (260 aa).

The tract at residues 231-260 is disordered; the sequence is FLEGLEERPQRKPALPADEPAEKAEEPMEH. Over residues 250–260 the composition is skewed to basic and acidic residues; sequence PAEKAEEPMEH.

Belongs to the peptidase T1A family. The 26S proteasome consists of a 20S proteasome core and two 19S regulatory subunits. The 20S proteasome core is a barrel-shaped complex made of 28 subunits that are arranged in four stacked rings. The two outer rings are each formed by seven alpha subunits, and the two inner rings are formed by seven beta subunits. The proteolytic activity is exerted by three beta-subunits PSMB5, PSMB6 and PSMB7.

The protein localises to the cytoplasm. Its subcellular location is the nucleus. In terms of biological role, component of the 20S core proteasome complex involved in the proteolytic degradation of most intracellular proteins. This complex plays numerous essential roles within the cell by associating with different regulatory particles. Associated with two 19S regulatory particles, forms the 26S proteasome and thus participates in the ATP-dependent degradation of ubiquitinated proteins. The 26S proteasome plays a key role in the maintenance of protein homeostasis by removing misfolded or damaged proteins that could impair cellular functions, and by removing proteins whose functions are no longer required. Associated with the PA200 or PA28, the 20S proteasome mediates ubiquitin-independent protein degradation. This type of proteolysis is required in several pathways including spermatogenesis (20S-PA200 complex) or generation of a subset of MHC class I-presented antigenic peptides (20S-PA28 complex). This is Proteasome subunit alpha type-1 (PSMA1) from Gallus gallus (Chicken).